The chain runs to 166 residues: Protein-export protein SecB (166 aa).

This sequence belongs to the SecB family. As to quaternary structure, homotetramer, a dimer of dimers. One homotetramer interacts with 1 SecA dimer.

The protein localises to the cytoplasm. One of the proteins required for the normal export of preproteins out of the cell cytoplasm. It is a molecular chaperone that binds to a subset of precursor proteins, maintaining them in a translocation-competent state. It also specifically binds to its receptor SecA. The protein is Protein-export protein SecB of Cereibacter sphaeroides (strain ATCC 17029 / ATH 2.4.9) (Rhodobacter sphaeroides).